Consider the following 473-residue polypeptide: Exodeoxyribonuclease I (473 aa).

The 180-residue stretch at 9-188 folds into the Exonuclease domain; that stretch reads IYDYESFGVN…AMADVYATIA (180 aa). The Mg(2+) site is built by Asp-11, Glu-13, and Asp-182. Substrate is bound at residue Glu-13. Positions 198–353 constitute an ExoI SH3-like domain; sequence PKLFQYFFEN…KVADIFNEER (156 aa). The ExoI C-terminal domain maps to 356 to 472; the sequence is ASNDNVETEL…QVYEYGIKLL (117 aa).

In terms of assembly, monomer. Interacts with ssb (via C-terminus); this interaction stimulates the exonuclease activity by recruiting the enzyme to its substrate. Mg(2+) serves as cofactor.

The catalysed reaction is Exonucleolytic cleavage in the 3'- to 5'-direction to yield nucleoside 5'-phosphates.. Degrades single-stranded DNA (ssDNA) in a highly processive manner. Also functions as a DNA deoxyribophosphodiesterase that releases deoxyribose-phosphate moieties following the cleavage of DNA at an apurinic/apyrimidinic (AP) site by either an AP endonuclease or AP lyase. Involved in genome maintenance but probably not in phase variation, which contributes to the virulence and disease. In Haemophilus influenzae (strain ATCC 51907 / DSM 11121 / KW20 / Rd), this protein is Exodeoxyribonuclease I (sbcB).